We begin with the raw amino-acid sequence, 350 residues long: tRNA-splicing endonuclease (350 aa).

Residues Y286, H297, and K328 contribute to the active site.

It belongs to the tRNA-intron endonuclease family. Archaeal long subfamily. In terms of assembly, homodimer.

It catalyses the reaction pretRNA = a 3'-half-tRNA molecule with a 5'-OH end + a 5'-half-tRNA molecule with a 2',3'-cyclic phosphate end + an intron with a 2',3'-cyclic phosphate and a 5'-hydroxyl terminus.. Endonuclease that removes tRNA introns. Cleaves pre-tRNA at the 5'- and 3'-splice sites to release the intron. The products are an intron and two tRNA half-molecules bearing 2',3' cyclic phosphate and 5'-OH termini. Recognizes a pseudosymmetric substrate in which 2 bulged loops of 3 bases are separated by a stem of 4 bp. In Methanosarcina barkeri (strain Fusaro / DSM 804), this protein is tRNA-splicing endonuclease.